The primary structure comprises 682 residues: Serine/threonine-protein kinase PAK 6 (682 aa).

4 disordered regions span residues 1 to 30 (MFRKKKKKRPEISAPQNFQHRVHTSFDPKE), 132 to 170 (SPQSEHTDPHGLYLSCNGGTPAGHRQVPWPEPQSPQALP), 200 to 256 (LQSS…QESS), and 270 to 367 (PATG…NLYL). Residues 12-25 (ISAPQNFQHRVHTS) form the CRIB domain. Residues 26–407 (FDPKEGKFVG…VVDQGDPRLL (382 aa)) form a linker region. 2 stretches are compositionally biased toward polar residues: residues 270–279 (PATGAASSSK) and 297–334 (KDSSSNLVAKAQSLPSEQPMGTFSPLTTSDTSSPQKSL). Residues 408-659 (LDSYVKIGEG…AQELLDHPFL (252 aa)) enclose the Protein kinase domain. ATP contacts are provided by residues 414 to 422 (IGEGSTGIV) and K437. Catalysis depends on D527, which acts as the Proton acceptor. A Phosphoserine; by autocatalysis modification is found at S561.

It belongs to the protein kinase superfamily. STE Ser/Thr protein kinase family. STE20 subfamily. Interacts tightly with GTP-bound but not GDP-bound CDC42/p21 and RAC1. Interacts with the androgen receptor AR. Interacts with IQGAP1 and PPM1B. Autophosphorylated. Phosphorylated by MAP2K6/MAPKK6, leading to PAK6 activation.

It is found in the cytoplasm. It localises to the nucleus. It catalyses the reaction L-seryl-[protein] + ATP = O-phospho-L-seryl-[protein] + ADP + H(+). The enzyme catalyses L-threonyl-[protein] + ATP = O-phospho-L-threonyl-[protein] + ADP + H(+). In terms of biological role, serine/threonine protein kinase that plays a role in the regulation of gene transcription. The kinase activity is induced by various effectors including AR or MAP2K6/MAPKK6. Phosphorylates the DNA-binding domain of androgen receptor/AR and thereby inhibits AR-mediated transcription. Also inhibits ESR1-mediated transcription. May play a role in cytoskeleton regulation by interacting with IQGAP1. May protect cells from apoptosis through phosphorylation of BAD. The sequence is that of Serine/threonine-protein kinase PAK 6 (Pak6) from Mus musculus (Mouse).